The primary structure comprises 274 residues: tRNA pseudouridine synthase A (274 aa).

The active-site Nucleophile is the Asp52. Tyr110 contributes to the substrate binding site.

This sequence belongs to the tRNA pseudouridine synthase TruA family. As to quaternary structure, homodimer.

It catalyses the reaction uridine(38/39/40) in tRNA = pseudouridine(38/39/40) in tRNA. Functionally, formation of pseudouridine at positions 38, 39 and 40 in the anticodon stem and loop of transfer RNAs. In Ralstonia nicotianae (strain ATCC BAA-1114 / GMI1000) (Ralstonia solanacearum), this protein is tRNA pseudouridine synthase A.